We begin with the raw amino-acid sequence, 92 residues long: UPF0223 protein SSA_0938 (92 aa).

This sequence belongs to the UPF0223 family.

This is UPF0223 protein SSA_0938 from Streptococcus sanguinis (strain SK36).